A 1192-amino-acid polypeptide reads, in one-letter code: Probable phospholipid-transporting ATPase IM (1192 aa).

At 1–44 (MFCSEKKLREVERIVKANDREYNEKFQYADNRIHTSKYNILTFL) the chain is on the cytoplasmic side. Residues 45 to 66 (PINLFEQFQRVANAYFLCLLIL) form a helical membrane-spanning segment. Residues 67 to 72 (QLIPEI) are Exoplasmic loop-facing. The chain crosses the membrane as a helical span at residues 73–92 (SSLTWFTTIVPLVLVITMTA). Topologically, residues 93-276 (VKDATDDYFR…TSIDRLMNTL (184 aa)) are cytoplasmic. A helical transmembrane segment spans residues 277–298 (VLWIFGFLICLGIILAIGNSIW). Residues 299–327 (ESQTGDQFRTFLFWNEGEKSSVFSGFLTF) are Exoplasmic loop-facing. A helical membrane pass occupies residues 328 to 349 (WSYIIILNTVVPISLYVSVEVI). Residues 350-871 (RLGHSYFINW…GRWSYFRMCK (522 aa)) are Cytoplasmic-facing. Asp-392 functions as the 4-aspartylphosphate intermediate in the catalytic mechanism. The ATP site is built by Asp-392, Lys-393, Thr-394, Glu-496, Phe-537, Lys-560, Arg-594, Thr-674, Gly-675, Asp-676, Arg-789, and Lys-795. Asp-392 lines the Mg(2+) pocket. A Mg(2+)-binding site is contributed by Thr-394. Residue Asp-815 coordinates Mg(2+). Positions 818 and 819 each coordinate ATP. Mg(2+) is bound at residue Asp-819. The chain crosses the membrane as a helical span at residues 872–892 (FLCYFFYKNFAFTLVHFWFGF). Topologically, residues 893 to 904 (FCGFSAQTVYDQ) are exoplasmic loop. The chain crosses the membrane as a helical span at residues 905–924 (WFITLFNIVYTSLPVLAMGI). The Cytoplasmic segment spans residues 925-954 (FDQDVSDQNSVDCPQLYKPGQLNLLFNKRK). A helical membrane pass occupies residues 955–976 (FFICVLHGIYTSLVLFFIPYGA). Topologically, residues 977 to 990 (FYNVAGEDGQHIAD) are exoplasmic loop. The helical transmembrane segment at 991–1013 (YQSFAVTMATSLVIVVSVQIALD) threads the bilayer. Topologically, residues 1014 to 1019 (TSYWTF) are cytoplasmic. Residues 1020–1040 (INHVFIWGSIAIYFSILFTMH) traverse the membrane as a helical segment. The Exoplasmic loop portion of the chain corresponds to 1041-1060 (SNGIFGIFPNQFPFVGNARH). Residues 1061–1085 (SLTQKCIWLVILLTTVASVMPVVAF) form a helical membrane-spanning segment. Over 1086–1192 (RFLKVDLYPT…SFSQDKTVKL (107 aa)) the chain is Cytoplasmic. A compositionally biased stretch (basic residues) spans 1104–1125 (QKAQKKARPPSSRRPRTRRSSS). Disordered stretches follow at residues 1104-1130 (QKAQKKARPPSSRRPRTRRSSSRRSGY) and 1143-1163 (TSGKNMRAKNPPPTSGLEKTH).

The protein belongs to the cation transport ATPase (P-type) (TC 3.A.3) family. Type IV subfamily. In terms of assembly, component of a P4-ATPase flippase complex which consists of a catalytic alpha subunit and an accessory beta subunit. Interacts with beta subunits TMEM30A and TMEM30B. Requires Mg(2+) as cofactor. As to expression, ubiquitously expressed at moderate levels.

It localises to the cell membrane. The protein resides in the golgi apparatus. It carries out the reaction ATP + H2O + phospholipidSide 1 = ADP + phosphate + phospholipidSide 2.. Functionally, component of a P4-ATPase flippase complex which catalyzes the hydrolysis of ATP coupled to the transport of aminophospholipids from the outer to the inner leaflet of various membranes and ensures the maintenance of asymmetric distribution of phospholipids. Phospholipid translocation also seems to be implicated in vesicle formation and in uptake of lipid signaling molecules. This Homo sapiens (Human) protein is Probable phospholipid-transporting ATPase IM (ATP8B4).